We begin with the raw amino-acid sequence, 110 residues long: uncharacterized protein (110 aa).

Residues 1–16 are compositionally biased toward basic and acidic residues; sequence MSVKLKYDKIDQRNGD. 2 disordered regions span residues 1 to 29 and 73 to 100; these read MSVKLKYDKIDQRNGDDSGGNHNNCGNGN and IKQQPQQQQPMNHTTPPSPHHLRFESPN. Over residues 20-29 the composition is skewed to low complexity; it reads GNHNNCGNGN.

This is an uncharacterized protein from Dictyostelium discoideum (Social amoeba).